A 391-amino-acid polypeptide reads, in one-letter code: DNA replication and repair protein RecF (391 aa).

An ATP-binding site is contributed by 30 to 37 (GLNGQGKT).

It belongs to the RecF family.

Its subcellular location is the cytoplasm. The RecF protein is involved in DNA metabolism; it is required for DNA replication and normal SOS inducibility. RecF binds preferentially to single-stranded, linear DNA. It also seems to bind ATP. The chain is DNA replication and repair protein RecF from Kineococcus radiotolerans (strain ATCC BAA-149 / DSM 14245 / SRS30216).